The sequence spans 65 residues: Disintegrin CC8B (65 aa).

Positions 1–65 (NSAHPCCDPV…DCPRNPWHKS (65 aa)) constitute a Disintegrin domain. Disulfide bonds link cysteine 6-cysteine 29, cysteine 20-cysteine 26, cysteine 25-cysteine 50, and cysteine 38-cysteine 57. The Cell attachment site; atypical (WGD) signature appears at 42–44 (WGD).

The protein belongs to the disintegrin family. Dimeric disintegrin subfamily. In terms of assembly, heterodimer with CC8A; disulfide-linked. Expressed by the venom gland.

The protein resides in the secreted. Its function is as follows. Inhibits integrins alpha-IIb/beta-3 (ITGA2B/ITGB3), alpha-V/beta-3 (ITGAV/ITGB3), and alpha-5/beta-1 (ITGA5/ITGB1). In Cerastes cerastes (Horned desert viper), this protein is Disintegrin CC8B.